A 320-amino-acid polypeptide reads, in one-letter code: Probable L,D-transpeptidase YcfS (320 aa).

The signal sequence occupies residues M1 to A23. A LysM domain is found at K45–I90. The L,D-TPase catalytic domain maps to E102–I241. Residue H201 is the Proton donor/acceptor of the active site. The Nucleophile role is filled by C217.

It belongs to the YkuD family. In terms of assembly, interacts with DsbG.

It is found in the periplasm. It participates in cell wall biogenesis; peptidoglycan biosynthesis. Responsible, at least in part, for anchoring of the major outer membrane lipoprotein (Lpp, also known as the Braun lipoprotein) to the peptidoglycan via a meso-diaminopimelyl-L-Lys- bond on the terminal residue of Lpp. The polypeptide is Probable L,D-transpeptidase YcfS (ycfS) (Escherichia coli (strain K12)).